The chain runs to 291 residues: uncharacterized protein (291 aa).

To E.cuniculi ECU03_0120.

This is an uncharacterized protein from Encephalitozoon cuniculi (strain GB-M1) (Microsporidian parasite).